Reading from the N-terminus, the 109-residue chain is Prefoldin subunit 1 (109 aa).

S2 carries the post-translational modification N-acetylserine.

Belongs to the prefoldin subunit beta family. In terms of assembly, heterohexamer of two PFD-alpha type and four PFD-beta type subunits.

It is found in the cytoplasm. Binds specifically to cytosolic chaperonin (c-CPN) and transfers target proteins to it. Binds to nascent polypeptide chain and promotes folding in an environment in which there are many competing pathways for nonnative proteins. The protein is Prefoldin subunit 1 (PFD1) of Saccharomyces cerevisiae (strain ATCC 204508 / S288c) (Baker's yeast).